The chain runs to 611 residues: Procollagen galactosyltransferase 1-A (611 aa).

Residues 1 to 24 (MSQAGVDRLLRGLQLLLLVLRLSA) form the signal peptide. N-linked (GlcNAc...) asparagine glycosylation is found at Asn85, Asn173, Asn312, Asn370, and Asn568. Residues 575 to 591 (WDRAKSRKTQQQEKLRS) show a composition bias toward basic and acidic residues. Residues 575–611 (WDRAKSRKTQQQEKLRSEALNSPSLGSPFDNTARDEL) are disordered. The short motif at 608 to 611 (RDEL) is the Prevents secretion from ER element.

Belongs to the glycosyltransferase 25 family.

It is found in the endoplasmic reticulum lumen. The catalysed reaction is (5R)-5-hydroxy-L-lysyl-[collagen] + UDP-alpha-D-galactose = (5R)-5-O-(beta-D-galactosyl)-5-hydroxy-L-lysyl-[collagen] + UDP + H(+). Its function is as follows. Beta-galactosyltransferase that transfers beta-galactose to hydroxylysine residues of type I collagen. By acting on collagen glycosylation, facilitates the formation of collagen triple helix. The protein is Procollagen galactosyltransferase 1-A (colgalt1-a) of Xenopus laevis (African clawed frog).